A 132-amino-acid chain; its full sequence is Large ribosomal subunit protein uL24 (132 aa).

This sequence belongs to the universal ribosomal protein uL24 family. As to quaternary structure, part of the 50S ribosomal subunit.

Functionally, one of two assembly initiator proteins, it binds directly to the 5'-end of the 23S rRNA, where it nucleates assembly of the 50S subunit. Its function is as follows. One of the proteins that surrounds the polypeptide exit tunnel on the outside of the subunit. In Synechococcus sp. (strain JA-3-3Ab) (Cyanobacteria bacterium Yellowstone A-Prime), this protein is Large ribosomal subunit protein uL24.